Here is a 115-residue protein sequence, read N- to C-terminus: MTKILVLCIGLISFSASASADTSYTEIREYVNRTAADYCGKNKACQAEFAQKLIYAYKDGERDKSSRYKNDTLLKRYAKKWNTLECSVAEEKDKAACHSMVDRLVDSYNRGLSTR.

Binds to the host (E.coli) valyl--tRNA ligase and thereby changes several of its physicochemical properties. In Enterobacteria phage T4 (Bacteriophage T4), this protein is Valyl--tRNA ligase modifier (vs).